The chain runs to 129 residues: Trefoil factor 2 (129 aa).

Residues 1 to 23 (MGRRDAQLLAALLVLGLCALAGS) form the signal peptide. P-type domains lie at 29-73 (CQCS…FHPL) and 79-122 (DQCV…FFPK). Cystine bridges form between C29–C127, C31–C58, C42–C57, C52–C69, C81–C107, C91–C106, and C101–C118.

In terms of tissue distribution, stomach.

It is found in the secreted. In terms of biological role, inhibits gastrointestinal motility and gastric acid secretion. Could function as a structural component of gastric mucus, possibly by stabilizing glycoproteins in the mucus gel through interactions with carbohydrate side chains. The protein is Trefoil factor 2 (TFF2) of Homo sapiens (Human).